The primary structure comprises 82 residues: uncharacterized protein (82 aa).

A Resolvase/invertase-type recombinase catalytic domain is found at 11-82; that stretch reads NVGIYVRVST…HIEQGIMTHC (72 aa). Residue S19 is the O-(5'-phospho-DNA)-serine intermediate of the active site.

The protein belongs to the site-specific recombinase resolvase family.

This is an uncharacterized protein from Bacillus phage phi105 (Bacteriophage phi-105).